Reading from the N-terminus, the 95-residue chain is Pyrimidine/purine nucleoside phosphorylase (95 aa).

This sequence belongs to the nucleoside phosphorylase PpnP family.

The catalysed reaction is a purine D-ribonucleoside + phosphate = a purine nucleobase + alpha-D-ribose 1-phosphate. It carries out the reaction adenosine + phosphate = alpha-D-ribose 1-phosphate + adenine. The enzyme catalyses cytidine + phosphate = cytosine + alpha-D-ribose 1-phosphate. It catalyses the reaction guanosine + phosphate = alpha-D-ribose 1-phosphate + guanine. The catalysed reaction is inosine + phosphate = alpha-D-ribose 1-phosphate + hypoxanthine. It carries out the reaction thymidine + phosphate = 2-deoxy-alpha-D-ribose 1-phosphate + thymine. The enzyme catalyses uridine + phosphate = alpha-D-ribose 1-phosphate + uracil. It catalyses the reaction xanthosine + phosphate = alpha-D-ribose 1-phosphate + xanthine. Its function is as follows. Catalyzes the phosphorolysis of diverse nucleosides, yielding D-ribose 1-phosphate and the respective free bases. Can use uridine, adenosine, guanosine, cytidine, thymidine, inosine and xanthosine as substrates. Also catalyzes the reverse reactions. The chain is Pyrimidine/purine nucleoside phosphorylase from Enterobacter sp. (strain 638).